The following is an 803-amino-acid chain: PR domain zinc finger protein 4 (803 aa).

Residues 408–532 (KQLVLRQSIV…PESELLFYYS (125 aa)) form the SET domain. C2H2-type zinc fingers lie at residues 593-615 (WKCSMCPQAFISPSKLHVHFMGH), 621-643 (HKCDFCSKAFSDPSNLRTHLKIH), 649-671 (YRCTLCDKSFTQKAHLESHMVIH), 677-699 (LKCDYCDKLFMRRQDLKQHVLIH), and 705-727 (IKCPKCDKLFLRTNHLKKHLNSH). The C2H2-type 6; degenerate zinc-finger motif lies at 733-755 (YVCEKCTKAYLTKYHLTRHLKTC). A disordered region spans residues 757 to 803 (EPSSSSSAQEEEDDESEEEDLADSMRTEDCRMGSAVYSTDESLSAHK). The span at 765 to 778 (QEEEDDESEEEDLA) shows a compositional bias: acidic residues. The span at 792 to 803 (VYSTDESLSAHK) shows a compositional bias: polar residues.

It belongs to the class V-like SAM-binding methyltransferase superfamily.

The protein localises to the nucleus. May function as a transcription factor involved in cell differentiation. This Mus musculus (Mouse) protein is PR domain zinc finger protein 4 (Prdm4).